Consider the following 137-residue polypeptide: MPTINQLVRKPRKSKIEKSDSPALNIGYNSHKKVQTKMAAPQKRGVATRVGTMTPKKPNSALRKFARVRLSNLIEVTAYIPGIGHNLQEHSVVLIRGGRVKDLPGVRYHIVRGALDTAGVADRKQGRSKYGAKRPKG.

Disordered regions lie at residues 1 to 21 (MPTI…KSDS) and 33 to 57 (KVQT…TPKK).

This sequence belongs to the universal ribosomal protein uS12 family. Part of the 30S ribosomal subunit. Contacts proteins S8 and S17. May interact with IF1 in the 30S initiation complex.

With S4 and S5 plays an important role in translational accuracy. In terms of biological role, interacts with and stabilizes bases of the 16S rRNA that are involved in tRNA selection in the A site and with the mRNA backbone. Located at the interface of the 30S and 50S subunits, it traverses the body of the 30S subunit contacting proteins on the other side and probably holding the rRNA structure together. The combined cluster of proteins S8, S12 and S17 appears to hold together the shoulder and platform of the 30S subunit. The sequence is that of Small ribosomal subunit protein uS12 from Streptococcus pyogenes serotype M1.